Consider the following 218-residue polypeptide: Glutathione S-transferase A (218 aa).

Position 1 is an N-acetylserine (Ser-1). The GST N-terminal domain maps to 2 to 82; it reads GKPVLHYFNV…YIATKYNLYG (81 aa). Lys-3 carries the post-translational modification N6-succinyllysine. Residues Tyr-8, Lys-44, 53–54, and 66–67 contribute to the glutathione site; these read QV and QS. In terms of domain architecture, GST C-terminal spans 84-206; that stretch reads DTKERLLIDM…LQPGSQRKPF (123 aa).

The protein belongs to the GST superfamily. Alpha family. Homodimer or heterodimer of GSTA1 and GSTA2.

It is found in the cytoplasm. The enzyme catalyses RX + glutathione = an S-substituted glutathione + a halide anion + H(+). The catalysed reaction is prostaglandin A2 + glutathione = prostaglandin A2-S-(R)-glutathione. It carries out the reaction prostaglandin J2 + glutathione = prostaglandin J2-S-(R)-glutathione. It catalyses the reaction (13S)-hydroperoxy-(9Z,11E)-octadecadienoate + 2 glutathione = (13S)-hydroxy-(9Z,11E)-octadecadienoate + glutathione disulfide + H2O. The enzyme catalyses androst-5-ene-3,17-dione = androst-4-ene-3,17-dione. Its function is as follows. Glutathione S-transferase that catalyzes the nucleophilic attack of the sulfur atom of glutathione on the electrophilic groups of a wide range of exogenous and endogenous compounds. Involved in the formation of glutathione conjugates of both prostaglandin A2 (PGA2) and prostaglandin J2 (PGJ2). It also catalyzes the isomerization of D5-androstene-3,17-dione (AD) into D4-androstene-3,17-dione and may therefore play an important role in hormone biosynthesis. Through its glutathione-dependent peroxidase activity toward the fatty acid hydroperoxide (13S)-hydroperoxy-(9Z,11E)-octadecadienoate/13-HPODE it is also involved in the metabolism of oxidized linoleic acid. In Cavia porcellus (Guinea pig), this protein is Glutathione S-transferase A.